The following is a 62-amino-acid chain: Rubredoxin-2 (62 aa).

The region spanning methionine 7–leucine 58 is the Rubredoxin-like domain. Cysteine 10, cysteine 15, cysteine 45, and cysteine 48 together coordinate Fe cation.

This sequence belongs to the rubredoxin family. As to quaternary structure, monomer. The cofactor is Fe(3+).

Rubredoxin is a small nonheme, iron protein lacking acid-labile sulfide. Its single Fe, chelated to 4 Cys, functions as an electron acceptor and may also stabilize the conformation of the molecule. The sequence is that of Rubredoxin-2 (rd2) from Desulfovibrio desulfuricans (strain ATCC 27774 / DSM 6949 / MB).